The following is a 395-amino-acid chain: Synaptotagmin-8 (395 aa).

Residues 1-44 (MQADRSMKMGHVSNPLSTSAPVDATAGPNLIPDLITKIPWPRWI) lie on the Extracellular side of the membrane. A helical; Signal-anchor for type III membrane protein membrane pass occupies residues 45–65 (LFIAILAAGVLLVSCLLCVIC). The Cytoplasmic segment spans residues 66 to 395 (YCCHRQRHRK…PRLPLLRPRS (330 aa)). C2 domains lie at 113 to 229 (PWGQ…ESWY) and 241 to 370 (QMGE…AQWH).

Belongs to the synaptotagmin family. In terms of assembly, homodimer or homooligomer. Homodimerization and homooligomerization do not depend on Ca(2+). Interacts with SYNCRIP isoform 2 C-terminus. Binds inositol 1,3,4,5-tetrakisphosphate (IP4). Binds to AP2 in a Ca(2+)-independent manner. Interacts with STX1A, STX1B and STX2; the interaction is Ca(2+)-dependent. Ubiquitous. Strongly expressed in heart, kidney, cerebral cortex, pancreas, and many insulin-secreting cells; lower expression in spleen. Broadly distributed in kidney.

The protein localises to the cell membrane. Its subcellular location is the cytoplasmic vesicle. The protein resides in the secretory vesicle. It localises to the acrosome. Its function is as follows. Involved in the trafficking and exocytosis of secretory vesicles in non-neuronal tissues. Mediates Ca(2+)-regulation of exocytosis acrosomal reaction in sperm. May mediate Ca(2+)-regulation of exocytosis in insulin secreted cells. The sequence is that of Synaptotagmin-8 (Syt8) from Rattus norvegicus (Rat).